Reading from the N-terminus, the 646-residue chain is Cytochrome b translation regulator cbp8 (646 aa).

Component of a complex, at least composed of cbp7 and cbp8.

Its subcellular location is the mitochondrion. Functionally, translation factor for cob1/cytochrome b; plays a role in cob1 mRNA stabilization and required for correct folding of the protein. The protein is Cytochrome b translation regulator cbp8 of Schizosaccharomyces pombe (strain 972 / ATCC 24843) (Fission yeast).